The sequence spans 230 residues: Ribosomal RNA large subunit methyltransferase E (230 aa).

Residues glycine 82, tryptophan 84, aspartate 100, aspartate 116, and aspartate 140 each coordinate S-adenosyl-L-methionine. Lysine 180 serves as the catalytic Proton acceptor.

Belongs to the class I-like SAM-binding methyltransferase superfamily. RNA methyltransferase RlmE family.

It is found in the cytoplasm. The catalysed reaction is uridine(2552) in 23S rRNA + S-adenosyl-L-methionine = 2'-O-methyluridine(2552) in 23S rRNA + S-adenosyl-L-homocysteine + H(+). Functionally, specifically methylates the uridine in position 2552 of 23S rRNA at the 2'-O position of the ribose in the fully assembled 50S ribosomal subunit. This Granulibacter bethesdensis (strain ATCC BAA-1260 / CGDNIH1) protein is Ribosomal RNA large subunit methyltransferase E.